Reading from the N-terminus, the 502-residue chain is 4,4'-diapophytoene desaturase (4,4'-diaponeurosporene-forming) (502 aa).

5 to 17 (VIGAGVTGLAAAA) serves as a coordination point for FAD.

Belongs to the carotenoid/retinoid oxidoreductase family. CrtN subfamily.

The catalysed reaction is 15-cis-4,4'-diapophytoene + 3 FAD + 3 H(+) = all-trans-4,4'-diaponeurosporene + 3 FADH2. It functions in the pathway carotenoid biosynthesis; staphyloxanthin biosynthesis; staphyloxanthin from farnesyl diphosphate: step 2/5. Functionally, involved in the biosynthesis of the yellow-orange carotenoid staphyloxanthin, which plays a role in the virulence via its protective function against oxidative stress. Catalyzes three successive dehydrogenation reactions that lead to the introduction of three double bonds into 4,4'-diapophytoene (dehydrosqualene), with 4,4'-diapophytofluene and 4,4'-diapo-zeta-carotene as intermediates, and 4,4'-diaponeurosporene (the major deep-yellow pigment in staphylococci strains) as the end product. In Staphylococcus aureus (strain bovine RF122 / ET3-1), this protein is 4,4'-diapophytoene desaturase (4,4'-diaponeurosporene-forming).